The following is a 276-amino-acid chain: Large ribosomal subunit protein uL2 (276 aa).

2 disordered regions span residues 1–58 (MAIR…GGGH) and 218–276 (RPIT…KNRK). Polar residues predominate over residues 16–27 (ASVSDFSDLTRS). Residues 255 to 276 (RRPKKASNKMIVRRRPNGKNRK) show a composition bias toward basic residues.

Belongs to the universal ribosomal protein uL2 family. Part of the 50S ribosomal subunit. Forms a bridge to the 30S subunit in the 70S ribosome.

In terms of biological role, one of the primary rRNA binding proteins. Required for association of the 30S and 50S subunits to form the 70S ribosome, for tRNA binding and peptide bond formation. It has been suggested to have peptidyltransferase activity; this is somewhat controversial. Makes several contacts with the 16S rRNA in the 70S ribosome. The chain is Large ribosomal subunit protein uL2 from Bifidobacterium animalis subsp. lactis (strain AD011).